The sequence spans 356 residues: Putative methylthioribose-1-phosphate isomerase (356 aa).

Residues R57–A59, R100, and Q206 each bind substrate. D247 acts as the Proton donor in catalysis. N257–K258 contacts substrate.

It belongs to the eIF-2B alpha/beta/delta subunits family. MtnA subfamily.

It catalyses the reaction 5-(methylsulfanyl)-alpha-D-ribose 1-phosphate = 5-(methylsulfanyl)-D-ribulose 1-phosphate. Catalyzes the interconversion of methylthioribose-1-phosphate (MTR-1-P) into methylthioribulose-1-phosphate (MTRu-1-P). The sequence is that of Putative methylthioribose-1-phosphate isomerase (aIF-2BI) from Pyrococcus abyssi (strain GE5 / Orsay).